Here is a 346-residue protein sequence, read N- to C-terminus: tRNA N6-adenosine threonylcarbamoyltransferase (346 aa).

Positions 120, 124, and 141 each coordinate a divalent metal cation. Substrate is bound by residues 141 to 145, Asp173, Gly188, Glu192, and Asn277; that span reads YVSGG. Asp305 serves as a coordination point for a divalent metal cation.

It belongs to the KAE1 / TsaD family. As to quaternary structure, component of the EKC/KEOPS complex composed of at least BUD32, CGI121, GON7, KAE1 and PCC1; the whole complex dimerizes. A divalent metal cation serves as cofactor.

The protein localises to the cytoplasm. The protein resides in the nucleus. It catalyses the reaction L-threonylcarbamoyladenylate + adenosine(37) in tRNA = N(6)-L-threonylcarbamoyladenosine(37) in tRNA + AMP + H(+). Component of the EKC/KEOPS complex that is required for the formation of a threonylcarbamoyl group on adenosine at position 37 (t(6)A37) in tRNAs that read codons beginning with adenine. The complex is probably involved in the transfer of the threonylcarbamoyl moiety of threonylcarbamoyl-AMP (TC-AMP) to the N6 group of A37. KAE1 likely plays a direct catalytic role in this reaction, but requires other protein(s) of the complex to fulfill this activity. The EKC/KEOPS complex also promotes both telomere uncapping and telomere elongation. The complex is required for efficient recruitment of transcriptional coactivators. The chain is tRNA N6-adenosine threonylcarbamoyltransferase from Gibberella zeae (strain ATCC MYA-4620 / CBS 123657 / FGSC 9075 / NRRL 31084 / PH-1) (Wheat head blight fungus).